A 213-amino-acid polypeptide reads, in one-letter code: Probable GTP-binding protein EngB (213 aa).

In terms of domain architecture, EngB-type G spans 25-203 (EGTEVAFAGR…EDVLNGWLLP (179 aa)). GTP is bound by residues 33-40 (GRSNAGKS), 60-64 (GRTQL), 80-83 (DLPG), 147-150 (TKAD), and 179-184 (AQMFSA). Mg(2+) contacts are provided by S40 and T62.

This sequence belongs to the TRAFAC class TrmE-Era-EngA-EngB-Septin-like GTPase superfamily. EngB GTPase family. Mg(2+) is required as a cofactor.

Functionally, necessary for normal cell division and for the maintenance of normal septation. This is Probable GTP-binding protein EngB from Saccharophagus degradans (strain 2-40 / ATCC 43961 / DSM 17024).